The chain runs to 1247 residues: Probable phosphorylase b kinase regulatory subunit alpha (1247 aa).

The tract at residues 853–883 (LKGLYEKACQQKLWGLVRHTAGMLGKRVEDL) is calmodulin-binding. A phosphoserine mark is found at Ser1030 and Ser1033. Positions 1052-1089 (DRQGQWLRRRRLDGALNRVPRDFYSRVWTVLEKCQGLA) are calmodulin-binding. The S-farnesyl cysteine moiety is linked to residue Cys1244.

It belongs to the phosphorylase b kinase regulatory chain family. Post-translationally, although the final Cys may be farnesylated, the terminal tripeptide is probably not removed, and the C-terminus is not methylated.

It localises to the cell membrane. It participates in glycan biosynthesis; glycogen metabolism. Functionally, phosphorylase b kinase catalyzes the phosphorylation of serine in certain substrates, including troponin I. The alpha chain may bind calmodulin. The chain is Probable phosphorylase b kinase regulatory subunit alpha from Drosophila melanogaster (Fruit fly).